Here is a 387-residue protein sequence, read N- to C-terminus: Aminodeoxyfutalosine synthase (387 aa).

The region spanning valine 52–glutamate 279 is the Radical SAM core domain. Residues cysteine 66, cysteine 70, and cysteine 73 each coordinate [4Fe-4S] cluster.

The protein belongs to the radical SAM superfamily. MqnE family. The cofactor is [4Fe-4S] cluster.

It catalyses the reaction 3-[(1-carboxyvinyl)-oxy]benzoate + S-adenosyl-L-methionine + H2O = 6-amino-6-deoxyfutalosine + hydrogencarbonate + L-methionine + H(+). The protein operates within quinol/quinone metabolism; menaquinone biosynthesis. Its function is as follows. Radical SAM enzyme that catalyzes the addition of the adenosyl radical to the double bond of 3-[(1-carboxyvinyl)oxy]benzoate, leading to aminodeoxyfutalosine (AFL), a key intermediate in the formation of menaquinone (MK, vitamin K2) from chorismate. In Streptomyces coelicolor (strain ATCC BAA-471 / A3(2) / M145), this protein is Aminodeoxyfutalosine synthase.